The following is a 339-amino-acid chain: UDP-glucose 4-epimerase (339 aa).

Residues 12–13, 32–37, 59–60, 81–85, Asn-100, Ser-125, Tyr-150, Lys-154, and Phe-179 each bind NAD(+); these read FI, DNLCNS, DI, and FAGLK. Substrate is bound by residues Ser-125 and Tyr-150. The active-site Proton acceptor is the Tyr-150. Substrate-binding positions include Asn-180, 200 to 201, 217 to 219, Arg-232, and 293 to 296; these read NL, SVF, and RAGD.

The protein belongs to the NAD(P)-dependent epimerase/dehydratase family. As to quaternary structure, homodimer. NAD(+) is required as a cofactor.

The catalysed reaction is UDP-alpha-D-glucose = UDP-alpha-D-galactose. It functions in the pathway carbohydrate metabolism; galactose metabolism. In terms of biological role, involved in the metabolism of galactose. Plays an essential role in the incorporation of galactose into meningococcal lipopolysaccharide surface molecules, which are important for pathogenesis. Catalyzes the conversion of UDP-galactose (UDP-Gal) to UDP-glucose (UDP-Glc) through a mechanism involving the transient reduction of NAD. This Neisseria meningitidis serogroup A / serotype 4A (strain DSM 15465 / Z2491) protein is UDP-glucose 4-epimerase (galE).